Reading from the N-terminus, the 128-residue chain is Putative pre-16S rRNA nuclease (128 aa).

Belongs to the YqgF nuclease family.

The protein localises to the cytoplasm. In terms of biological role, could be a nuclease involved in processing of the 5'-end of pre-16S rRNA. The chain is Putative pre-16S rRNA nuclease from Sulfurovum sp. (strain NBC37-1).